Here is an 85-residue protein sequence, read N- to C-terminus: Large ribosomal subunit protein bL27 (85 aa).

Positions 1–21 are disordered; the sequence is MAHKKAGGSSRNGRDSEAKRL.

This sequence belongs to the bacterial ribosomal protein bL27 family.

This Aeromonas hydrophila subsp. hydrophila (strain ATCC 7966 / DSM 30187 / BCRC 13018 / CCUG 14551 / JCM 1027 / KCTC 2358 / NCIMB 9240 / NCTC 8049) protein is Large ribosomal subunit protein bL27.